A 174-amino-acid chain; its full sequence is Secreted cysteine-rich protein UMAG_00792 (174 aa).

An N-terminal signal peptide occupies residues 1 to 26 (MVSFKSSSLFLHSLSALLVLTTLSSA). N-linked (GlcNAc...) asparagine glycosylation is present at N77.

In terms of assembly, secreted cysteine-rich proteins (SCRPs) are predicted to form amyloids.

Its subcellular location is the secreted. Secreted cysteine-rich protein that might form amyloid strutures which are involved in attachment to hydrophobic surfaces and in formation of hydrophobic aerial hyphae. This Mycosarcoma maydis (Corn smut fungus) protein is Secreted cysteine-rich protein UMAG_00792.